The sequence spans 571 residues: Hemagglutinin-neuraminidase (571 aa).

The Intravirion portion of the chain corresponds to 1–26 (MDRAVSRVVLENEEREAKNTWRFVFR). The helical transmembrane segment at 27-47 (IAVLLLIVMTLAISAAALVYS) threads the bilayer. Residues 48-571 (MGASTPRDLA…LVEILKDDRV (524 aa)) are Virion surface-facing. Asparagine 119 carries N-linked (GlcNAc...) asparagine; by host glycosylation. Residues 124 to 152 (GAPVHDPDYIGGIGKELIVDDTSDVTSFY) form an important for interaction with fusion/F protein region. 3 cysteine pairs are disulfide-bonded: cysteine 172–cysteine 196, cysteine 186–cysteine 247, and cysteine 238–cysteine 251. An involved in neuraminidase activity region spans residues 234–239 (NRKSCS). A glycan (N-linked (GlcNAc...) asparagine; by host) is linked at asparagine 341. A disulfide bridge links cysteine 455 with cysteine 465. 2 N-linked (GlcNAc...) asparagine; by host glycosylation sites follow: asparagine 481 and asparagine 508. A disulfide bond links cysteine 531 and cysteine 542.

This sequence belongs to the paramyxoviruses hemagglutinin-neuraminidase family. In terms of assembly, homotetramer; composed of disulfide-linked homodimers. Interacts with F protein trimer. Interacts with host CG-1B; this interaction inhibits viral adsorption and replication rather than internalization.

Its subcellular location is the virion membrane. It localises to the host cell membrane. It carries out the reaction Hydrolysis of alpha-(2-&gt;3)-, alpha-(2-&gt;6)-, alpha-(2-&gt;8)- glycosidic linkages of terminal sialic acid residues in oligosaccharides, glycoproteins, glycolipids, colominic acid and synthetic substrates.. In terms of biological role, mediates the viral entry into the host cell together with fusion/F protein. Attaches the virus to sialic acid-containing cell receptors and thereby initiates infection. Binding of HN protein to the receptor induces a conformational change that allows the F protein to trigger virion/cell membranes fusion. Functionally, neuraminidase activity ensures the efficient spread of the virus by dissociating the mature virions from the neuraminic acid containing glycoproteins. This is Hemagglutinin-neuraminidase (HN) from Newcastle disease virus (strain Iba/85) (NDV).